The following is a 28-amino-acid chain: Apolipoprotein C-I (28 aa).

It belongs to the apolipoprotein C1 family.

The protein resides in the secreted. Inhibitor of lipoprotein binding to the low density lipoprotein (LDL) receptor, LDL receptor-related protein, and very low density lipoprotein (VLDL) receptor. Associates with high density lipoproteins (HDL) and the triacylglycerol-rich lipoproteins in the plasma and makes up about 10% of the protein of the VLDL and 2% of that of HDL. Appears to interfere directly with fatty acid uptake and is also the major plasma inhibitor of cholesteryl ester transfer protein (CETP). Binds free fatty acids and reduces their intracellular esterification. Modulates the interaction of APOE with beta-migrating VLDL and inhibits binding of beta-VLDL to the LDL receptor-related protein. This Oryctolagus cuniculus (Rabbit) protein is Apolipoprotein C-I (APOC1).